The sequence spans 152 residues: Transcriptional regulator MraZ (152 aa).

SpoVT-AbrB domains follow at residues 5 to 52 and 81 to 124; these read ANAV…PLPE and AVDL…NEDA.

This sequence belongs to the MraZ family. Forms oligomers.

It localises to the cytoplasm. Its subcellular location is the nucleoid. This chain is Transcriptional regulator MraZ, found in Azotobacter vinelandii (strain DJ / ATCC BAA-1303).